The primary structure comprises 1392 residues: DNA-directed RNA polymerase subunit beta'' (1392 aa).

The Zn(2+) site is built by Cys224, Cys295, Cys302, and Cys305.

It belongs to the RNA polymerase beta' chain family. RpoC2 subfamily. In terms of assembly, in plastids the minimal PEP RNA polymerase catalytic core is composed of four subunits: alpha, beta, beta', and beta''. When a (nuclear-encoded) sigma factor is associated with the core the holoenzyme is formed, which can initiate transcription. Zn(2+) is required as a cofactor.

It localises to the plastid. The protein resides in the chloroplast. It catalyses the reaction RNA(n) + a ribonucleoside 5'-triphosphate = RNA(n+1) + diphosphate. In terms of biological role, DNA-dependent RNA polymerase catalyzes the transcription of DNA into RNA using the four ribonucleoside triphosphates as substrates. The sequence is that of DNA-directed RNA polymerase subunit beta'' from Nicotiana tomentosiformis (Tobacco).